The sequence spans 158 residues: MGQFTVVSLGLLAMFLSLSGAKGDNCPASWISRNGVCNKLFPDRKTWLEAEMYCRALKPGCHLASLHRDSDSTVLAWYISDHFKGAGHVWIGLRDTNRKRTWKWSDRTSTNYFSWNQGEPNNVQDDENCVHLWAPSGYLKWNDEPCASLHPFICQYKL.

Positions 1–23 are cleaved as a signal peptide; the sequence is MGQFTVVSLGLLAMFLSLSGAKG. 3 cysteine pairs are disulfide-bonded: Cys-26–Cys-37, Cys-54–Cys-154, and Cys-129–Cys-146. The region spanning 33–155 is the C-type lectin domain; the sequence is RNGVCNKLFP…CASLHPFICQ (123 aa). The Mannose-binding signature appears at 119–121; sequence EPN. Residues Glu-127, Asn-142, and Asp-143 each coordinate Ca(2+).

This sequence belongs to the true venom lectin family. In terms of tissue distribution, expressed by the venom gland.

The protein localises to the secreted. Mannose-binding lectin which recognizes specific carbohydrate structures and agglutinates a variety of animal cells by binding to cell-surface glycoproteins and glycolipids. May be a calcium-dependent lectin. In Pseudoferania polylepis (Macleay's water snake), this protein is C-type lectin lectoxin-Enh4.